The primary structure comprises 361 residues: Velvet complex subunit B (361 aa).

The 336-residue stretch at 1–336 (MIVRTEDQKL…GNQGQKLPLR (336 aa)) folds into the Velvet domain. 2 disordered regions span residues 42 to 222 (PSST…NNIP) and 327 to 361 (GNQG…EDDS). Composition is skewed to low complexity over residues 57–74 (PSAS…SRPP) and 93–107 (PPSS…SQSQ). The span at 108 to 127 (DNLTPSSPYPPHSNSEQPQT) shows a compositional bias: polar residues. The segment covering 130 to 147 (YPPPPPIDRAAPFPPPVL) has biased composition (pro residues). 3 stretches are compositionally biased toward polar residues: residues 149 to 168 (SIQS…NNDD), 181 to 196 (GYTN…YGSG), and 212 to 222 (SGNATPQNNIP). Positions 335 to 349 (LRNRHGTGSKRRRRN) are enriched in basic residues.

It belongs to the velvet family. VelB subfamily. As to quaternary structure, component of the heterotrimeric velvet complex composed of laeA, veA and velB; VeA acting as a bridging protein between laeA and velB. Forms a heterodimeric complex with vosA; the formation of the velB-vosA complex is light-dependent.

Its subcellular location is the nucleus. It is found in the cytoplasm. In terms of biological role, component of the velvet transcription factor complex that controls sexual/asexual developmental ratio in response to light, promoting sexual development in the darkness while stimulating asexual sporulation under illumination. The velvet complex acts as a global regulator for secondary metabolite gene expression. Component of the velB-VosA heterodimeric complex that plays a dual role in activating genes associated with spore maturation and repressing certain development-associated genes. The velB-VosA complex binds DNA through the DNA-binding domain of vosA that recognizes an 11-nucleotide consensus sequence 5'-CTGGCCGCGGC-3' consisting of two motifs in the promoters of key developmental regulatory genes. This chain is Velvet complex subunit B, found in Coprinopsis cinerea (strain Okayama-7 / 130 / ATCC MYA-4618 / FGSC 9003) (Inky cap fungus).